A 351-amino-acid chain; its full sequence is Muscleblind-like protein 2a (351 aa).

C3H1-type zinc fingers lie at residues 13–41 (WLTL…HPPK), 47–73 (NGRV…HPPA), 177–205 (TDKL…HPSD), and 213–239 (DNTV…HPPA).

Belongs to the muscleblind family. Expressed in fast and slow myotomal muscle, heart, liver, skin, brain and testis.

It is found in the nucleus. The protein resides in the cytoplasm. Functionally, involved in pre-mRNA alternative splicing regulation. RNA-binding protein that binds to 5'ACACCC-3' core sequence. This is Muscleblind-like protein 2a (mbnl2a) from Takifugu rubripes (Japanese pufferfish).